The primary structure comprises 24 residues: MARRGFSCLLLSTTATDLPVKRRT.

It belongs to the humanin family. Highly expressed in the kidney, heart muscle and testis.

The protein resides in the secreted. Its subcellular location is the cytoplasm. In terms of biological role, plays a role as a neuroprotective and antiapoptotic factor. In Homo sapiens (Human), this protein is Humanin-like 9.